Consider the following 465-residue polypeptide: Glutamate--tRNA ligase (465 aa).

The short motif at 8 to 18 (PSPTGYLHIGG) is the 'HIGH' region element. Residues 236–240 (RLSKR) carry the 'KMSKS' region motif. K239 is an ATP binding site.

Belongs to the class-I aminoacyl-tRNA synthetase family. Glutamate--tRNA ligase type 1 subfamily. In terms of assembly, monomer.

Its subcellular location is the cytoplasm. The catalysed reaction is tRNA(Glu) + L-glutamate + ATP = L-glutamyl-tRNA(Glu) + AMP + diphosphate. In terms of biological role, catalyzes the attachment of glutamate to tRNA(Glu) in a two-step reaction: glutamate is first activated by ATP to form Glu-AMP and then transferred to the acceptor end of tRNA(Glu). In Nitrosospira multiformis (strain ATCC 25196 / NCIMB 11849 / C 71), this protein is Glutamate--tRNA ligase.